The following is a 116-amino-acid chain: uncharacterized protein (116 aa).

This is an uncharacterized protein from Homo sapiens (Human).